A 365-amino-acid chain; its full sequence is Histidinol-phosphate aminotransferase (365 aa).

K221 is modified (N6-(pyridoxal phosphate)lysine).

It belongs to the class-II pyridoxal-phosphate-dependent aminotransferase family. Histidinol-phosphate aminotransferase subfamily. As to quaternary structure, homodimer. Requires pyridoxal 5'-phosphate as cofactor.

The enzyme catalyses L-histidinol phosphate + 2-oxoglutarate = 3-(imidazol-4-yl)-2-oxopropyl phosphate + L-glutamate. It participates in amino-acid biosynthesis; L-histidine biosynthesis; L-histidine from 5-phospho-alpha-D-ribose 1-diphosphate: step 7/9. The chain is Histidinol-phosphate aminotransferase from Nitrobacter hamburgensis (strain DSM 10229 / NCIMB 13809 / X14).